The chain runs to 500 residues: NAD(P)H-quinone oxidoreductase chain 4, chloroplastic (500 aa).

14 helical membrane-spanning segments follow: residues 4 to 24, 31 to 51, 84 to 104, 111 to 129, 134 to 154, 167 to 187, 208 to 228, 242 to 262, 272 to 292, 305 to 325, 330 to 350, 386 to 406, 416 to 436, and 463 to 483; these read FPWLTIFVVLPISGGSLIFLF, VIKWYTIFICIFELLLMTYAF, GFSLGPILLTGFITTLATLAA, SRLFHFLMLAMYSGQIGLF, LLLFFIMWELELIPVYLLLSM, FILYTAGGSVFLLMGALGIAL, ALEIFFYIGFLIAFAVKSPII, HYSTCMLLAGILLKMGAYGLV, AHSIFSPWLIIVGVMQIIYAA, IAYSSVSHMGFIIIGICSISD, GAILQIISHGFIGAALFFLAG, LALPGMSGFFAELIVFFGIIT, ILITFVMAVGMILTPIYLLSM, and FVSISILLPVIGIGFYPDFVF.

This sequence belongs to the complex I subunit 4 family.

It is found in the plastid. The protein resides in the chloroplast thylakoid membrane. The enzyme catalyses a plastoquinone + NADH + (n+1) H(+)(in) = a plastoquinol + NAD(+) + n H(+)(out). It carries out the reaction a plastoquinone + NADPH + (n+1) H(+)(in) = a plastoquinol + NADP(+) + n H(+)(out). The polypeptide is NAD(P)H-quinone oxidoreductase chain 4, chloroplastic (Manihot esculenta (Cassava)).